Consider the following 128-residue polypeptide: Holo-[acyl-carrier-protein] synthase (128 aa).

Positions 8 and 58 each coordinate Mg(2+).

This sequence belongs to the P-Pant transferase superfamily. AcpS family. Mg(2+) serves as cofactor.

Its subcellular location is the cytoplasm. It carries out the reaction apo-[ACP] + CoA = holo-[ACP] + adenosine 3',5'-bisphosphate + H(+). In terms of biological role, transfers the 4'-phosphopantetheine moiety from coenzyme A to a Ser of acyl-carrier-protein. The chain is Holo-[acyl-carrier-protein] synthase from Exiguobacterium sibiricum (strain DSM 17290 / CCUG 55495 / CIP 109462 / JCM 13490 / 255-15).